Reading from the N-terminus, the 224-residue chain is Deoxyribose-phosphate aldolase (224 aa).

Catalysis depends on aspartate 98, which acts as the Proton donor/acceptor. Catalysis depends on lysine 159, which acts as the Schiff-base intermediate with acetaldehyde. Lysine 189 functions as the Proton donor/acceptor in the catalytic mechanism.

It belongs to the DeoC/FbaB aldolase family. DeoC type 1 subfamily.

Its subcellular location is the cytoplasm. The catalysed reaction is 2-deoxy-D-ribose 5-phosphate = D-glyceraldehyde 3-phosphate + acetaldehyde. Its pathway is carbohydrate degradation; 2-deoxy-D-ribose 1-phosphate degradation; D-glyceraldehyde 3-phosphate and acetaldehyde from 2-deoxy-alpha-D-ribose 1-phosphate: step 2/2. Functionally, catalyzes a reversible aldol reaction between acetaldehyde and D-glyceraldehyde 3-phosphate to generate 2-deoxy-D-ribose 5-phosphate. This chain is Deoxyribose-phosphate aldolase, found in Methanothermobacter thermautotrophicus (strain ATCC 29096 / DSM 1053 / JCM 10044 / NBRC 100330 / Delta H) (Methanobacterium thermoautotrophicum).